The chain runs to 246 residues: Neurotrophic factor BDNF precursor form (246 aa).

An N-terminal signal peptide occupies residues 1 to 18; the sequence is MTILFLTMVISYLSCMKA. A propeptide spanning residues 19 to 127 is cleaved from the precursor; the sequence is TPMKEVSIRG…AANMSMRVRR (109 aa). N-linked (GlcNAc...) asparagine glycosylation is present at Asn120. Intrachain disulfides connect Cys140–Cys207, Cys185–Cys236, and Cys195–Cys238.

Belongs to the NGF-beta family.

Its subcellular location is the secreted. In terms of biological role, promotes the survival of neuronal populations that are all located either in the central nervous system or directly connected to it. The chain is Neurotrophic factor BDNF precursor form (BDNF) from Ptyas major (Chinese green snake).